A 486-amino-acid polypeptide reads, in one-letter code: Cardiolipin synthase A (486 aa).

2 helical membrane-spanning segments follow: residues 3-23 (TFYT…IAGV) and 38-58 (MAWL…YLSF). PLD phosphodiesterase domains lie at 219 to 246 (MDLR…VDPR) and 399 to 426 (EGGL…DMRS). Residues H224, K226, D231, H404, K406, and D411 contribute to the active site.

This sequence belongs to the phospholipase D family. Cardiolipin synthase subfamily. ClsA sub-subfamily.

It is found in the cell inner membrane. The catalysed reaction is 2 a 1,2-diacyl-sn-glycero-3-phospho-(1'-sn-glycerol) = a cardiolipin + glycerol. Its function is as follows. Catalyzes the reversible phosphatidyl group transfer from one phosphatidylglycerol molecule to another to form cardiolipin (CL) (diphosphatidylglycerol) and glycerol. The sequence is that of Cardiolipin synthase A from Citrobacter koseri (strain ATCC BAA-895 / CDC 4225-83 / SGSC4696).